The sequence spans 473 residues: Photosystem II CP43 reaction center protein (473 aa).

A propeptide spanning residues 1–14 is cleaved from the precursor; that stretch reads MKILYSPRRFYPVE. Threonine 15 carries the post-translational modification N-acetylthreonine. The residue at position 15 (threonine 15) is a Phosphothreonine. A run of 5 helical transmembrane segments spans residues 69 to 93, 134 to 155, 178 to 200, 255 to 275, and 291 to 312; these read LFEVAHFVSEKPMYEQGLILLPHLA, LIGPETLEESFPFFGYTWKDKN, KALYFGGLYDTWAPGGGDVREIT, KPFAWARRAFVWSGEAYLSYS, and WFNNTAYPSEFYGPTGPEASQA. Glutamate 367 contacts [CaMn4O5] cluster. Residues 447–471 form a helical membrane-spanning segment; the sequence is RARAAAAGFEKGIDRDTEPVLSMTP.

The protein belongs to the PsbB/PsbC family. PsbC subfamily. In terms of assembly, PSII is composed of 1 copy each of membrane proteins PsbA, PsbB, PsbC, PsbD, PsbE, PsbF, PsbH, PsbI, PsbJ, PsbK, PsbL, PsbM, PsbT, PsbX, PsbY, PsbZ, Psb30/Ycf12, at least 3 peripheral proteins of the oxygen-evolving complex and a large number of cofactors. It forms dimeric complexes. Binds multiple chlorophylls and provides some of the ligands for the Ca-4Mn-5O cluster of the oxygen-evolving complex. It may also provide a ligand for a Cl- that is required for oxygen evolution. PSII binds additional chlorophylls, carotenoids and specific lipids. is required as a cofactor.

The protein resides in the plastid. It localises to the chloroplast thylakoid membrane. One of the components of the core complex of photosystem II (PSII). It binds chlorophyll and helps catalyze the primary light-induced photochemical processes of PSII. PSII is a light-driven water:plastoquinone oxidoreductase, using light energy to abstract electrons from H(2)O, generating O(2) and a proton gradient subsequently used for ATP formation. The polypeptide is Photosystem II CP43 reaction center protein (Adiantum capillus-veneris (Maidenhair fern)).